The sequence spans 583 residues: Chromosomal replication initiator protein DnaA (583 aa).

A domain I, interacts with DnaA modulators region spans residues 1–91 (MNAENLDPAT…SPMFPAFKVM (91 aa)). 2 disordered regions span residues 86–179 (PAFK…QQPV) and 197–232 (VAGF…NYRD). The interval 91–235 (MPPAQPEPQT…VTGNYRDPVT (145 aa)) is domain II. Residues 97–106 (EPQTTASPED) are compositionally biased toward polar residues. 2 stretches are compositionally biased toward basic and acidic residues: residues 126–135 (EDSRTPRHSA) and 147–174 (QERE…EHEP). Residues 205-226 (AGTTAPQYPPQSEMQGSFTPGV) show a composition bias toward polar residues. The interval 236 to 460 (HLNSNDTFDT…GALKRVIAMA (225 aa)) is domain III, AAA+ region. Glycine 280, glycine 282, lysine 283, and threonine 284 together coordinate ATP. Residues 461–583 (SLNHQPVTRA…TVELKQHLND (123 aa)) form a domain IV, binds dsDNA region.

This sequence belongs to the DnaA family. In terms of assembly, oligomerizes as a right-handed, spiral filament on DNA at oriC.

The protein localises to the cytoplasm. Plays an essential role in the initiation and regulation of chromosomal replication. ATP-DnaA binds to the origin of replication (oriC) to initiate formation of the DNA replication initiation complex once per cell cycle. Binds the DnaA box (a 9 base pair repeat at the origin) and separates the double-stranded (ds)DNA. Forms a right-handed helical filament on oriC DNA; dsDNA binds to the exterior of the filament while single-stranded (ss)DNA is stabiized in the filament's interior. The ATP-DnaA-oriC complex binds and stabilizes one strand of the AT-rich DNA unwinding element (DUE), permitting loading of DNA polymerase. After initiation quickly degrades to an ADP-DnaA complex that is not apt for DNA replication. Binds acidic phospholipids. The polypeptide is Chromosomal replication initiator protein DnaA (Bifidobacterium animalis subsp. lactis (strain AD011)).